A 150-amino-acid chain; its full sequence is uncharacterized protein (150 aa).

This is an uncharacterized protein from Homo sapiens (Human).